A 334-amino-acid chain; its full sequence is Dihydroorotate dehydrogenase (quinone) (334 aa).

FMN-binding positions include 59 to 63 and T83; that span reads AGLDK. K63 contributes to the substrate binding site. 108–112 provides a ligand contact to substrate; it reads NRMGF. Residues N136 and N169 each contribute to the FMN site. N169 contacts substrate. The active-site Nucleophile is S172. N174 provides a ligand contact to substrate. 2 residues coordinate FMN: K214 and T242. 243-244 is a binding site for substrate; it reads NT. FMN contacts are provided by residues G265, G294, and 315–316; that span reads YS.

This sequence belongs to the dihydroorotate dehydrogenase family. Type 2 subfamily. In terms of assembly, monomer. The cofactor is FMN.

It localises to the cell membrane. The enzyme catalyses (S)-dihydroorotate + a quinone = orotate + a quinol. It participates in pyrimidine metabolism; UMP biosynthesis via de novo pathway; orotate from (S)-dihydroorotate (quinone route): step 1/1. Catalyzes the conversion of dihydroorotate to orotate with quinone as electron acceptor. The chain is Dihydroorotate dehydrogenase (quinone) from Acinetobacter baumannii (strain AB0057).